We begin with the raw amino-acid sequence, 359 residues long: Uroporphyrinogen decarboxylase (359 aa).

Arginine 28, alanine 30, arginine 32, aspartate 79, tyrosine 157, serine 212, and histidine 335 together coordinate coproporphyrinogen III.

It belongs to the uroporphyrinogen decarboxylase family. In terms of assembly, monomer.

The protein resides in the nucleus. Its subcellular location is the cytoplasm. The catalysed reaction is uroporphyrinogen III + 4 H(+) = coproporphyrinogen III + 4 CO2. It catalyses the reaction uroporphyrinogen I + 4 H(+) = coproporphyrinogen I + 4 CO2. It functions in the pathway porphyrin-containing compound metabolism; protoporphyrin-IX biosynthesis; coproporphyrinogen-III from 5-aminolevulinate: step 4/4. Catalyzes the sequential decarboxylation of four acetate groups of uroporphyrinogen-III (octacarboxyporphyrin) to yield coproporphyrinogen-III (tetracarboxyporphyrin) with the formation of intermediate hepta-, hexa- and penta-carboxylate porphyrinogens in the heme biosynthesis pathway. Acts on a number of porphyrinogens, but only coproporphyrinogen III can ultimately be converted to heme. This is Uroporphyrinogen decarboxylase (hem12) from Schizosaccharomyces pombe (strain 972 / ATCC 24843) (Fission yeast).